A 781-amino-acid polypeptide reads, in one-letter code: Phenylalanine--tRNA ligase beta subunit (781 aa).

The tRNA-binding domain occupies 39-147 (APPFNDVVVA…DDAPVGEDLR (109 aa)). The region spanning 398-473 (PRREPIELRL…RLFGYDRIPA (76 aa)) is the B5 domain. Mg(2+)-binding residues include D451, D457, E460, and E461. Residues 687–780 (SRFPQVRRDL…AARRCSATLR (94 aa)) enclose the FDX-ACB domain.

Belongs to the phenylalanyl-tRNA synthetase beta subunit family. Type 1 subfamily. In terms of assembly, tetramer of two alpha and two beta subunits. The cofactor is Mg(2+).

The protein resides in the cytoplasm. The enzyme catalyses tRNA(Phe) + L-phenylalanine + ATP = L-phenylalanyl-tRNA(Phe) + AMP + diphosphate + H(+). This chain is Phenylalanine--tRNA ligase beta subunit, found in Thiobacillus denitrificans (strain ATCC 25259 / T1).